A 115-amino-acid chain; its full sequence is Cyclin-dependent protein kinase inhibitor SMR3 (115 aa).

Over residues 17–36 (KIRLPTRPELDIPDSDHEDP) the composition is skewed to basic and acidic residues. The disordered stretch occupies residues 17–82 (KIRLPTRPEL…RSSGTKRKLT (66 aa)). Residues 67-81 (RKPKPNRSSGTKRKL) show a composition bias toward basic residues.

As to quaternary structure, interacts with CDKA-1 and D-type cyclins. As to expression, expressed at low levels in roots and stems.

The protein localises to the nucleus. Probable cyclin-dependent protein kinase (CDK) inhibitor that functions as a repressor of mitosis in the endoreduplication cell cycle. The protein is Cyclin-dependent protein kinase inhibitor SMR3 of Arabidopsis thaliana (Mouse-ear cress).